The primary structure comprises 1440 residues: Genome polyprotein (1440 aa).

A propeptide spans 32-53 (GGNEGSIMWLASLAVVIACAGA) (ER anchor for the capsid protein C, removed in mature form by serine protease NS3). A helical transmembrane segment spans residues 36–56 (GSIMWLASLAVVIACAGAMKL). Over 57 to 180 (SNFQGKLLMT…ATRYLMKTEN (124 aa)) the chain is Extracellular. N68 carries an N-linked (GlcNAc...) asparagine; by host glycan. Residues 181–201 (WIVRNPGYAFLAAILGWMLGS) traverse the membrane as a helical segment. The Cytoplasmic portion of the chain corresponds to 202 to 207 (NNGQRR). A helical membrane pass occupies residues 208–222 (WYFTILLLLVAPAYS). Over 223-674 (FNCLGMGNRD…QVFGGAFRTL (452 aa)) the chain is Extracellular. 6 disulfides stabilise this stretch: C225-C252, C282-C338, C282-C343, C296-C327, C314-C338, and C314-C343. The tract at residues 320–333 (DRGWGNGCGLFGKG) is fusion peptide. The N-linked (GlcNAc...) asparagine; by host glycan is linked to N376. 2 disulfide bridges follow: C412–C509 and C526–C557. A helical membrane pass occupies residues 675–695 (FGGMSWITQGLMGALLLWMGV). Residues 696 to 701 (NARDRS) are Cytoplasmic-facing. Residues 702–722 (IALAFLATGGVLVFLATNVHA) traverse the membrane as a helical segment. The Extracellular segment spans residues 723-1147 (DTGCAIDITR…AFAEANSGGD (425 aa)). Cystine bridges form between C726–C737, C777–C865, C901–C945, C1002–C1051, C1013–C1034, and C1035–C1038. Residues N852 and N929 are each glycosylated (N-linked (GlcNAc...) asparagine; by host). The helical transmembrane segment at 1148-1168 (VLHLALIAVFKIQPAFLVMNM) threads the bilayer. The Cytoplasmic segment spans residues 1169–1178 (LSTRWTNQEN). A helical transmembrane segment spans residues 1179-1199 (VVLVLGAAFFHLASVDLQIGV). Position 1200 (H1200) is a topological domain, lumenal. Residues 1201-1221 (GILNAAAIAWMIVRAITFPTT) form a helical membrane-spanning segment. Residues 1222-1237 (SSVTMPVLALLTPGMR) are Cytoplasmic-facing. A helical transmembrane segment spans residues 1238 to 1258 (ALYLDTYRIILLVIGICSLLQ). Residues 1259 to 1269 (ERKKTMAKKKG) are Lumenal-facing. Residues 1270–1290 (AVLLGLALTSTGWFSPTTIAA) traverse the membrane as a helical segment. Residues 1291–1302 (GLMVCNPNKKRG) are Cytoplasmic-facing. A helical transmembrane segment spans residues 1303 to 1323 (WPATEFLSAVGLMFAIVGGLA). Topologically, residues 1324–1326 (ELD) are lumenal. A helical membrane pass occupies residues 1327-1347 (IESMSIPFMLAGLMAVSYVVS). At 1348–1404 (GKATDMWLERAADISWEMDAAITGSSRRLDVKLDDDGDFHLIDDPGVPWKVWVLRMS) the chain is on the cytoplasmic side. Positions 1355–1394 (LERAADISWEMDAAITGSSRRLDVKLDDDGDFHLIDDPGV) are interacts with and activates NS3 protease. Positions 1405–1425 (CIGLAALTPWAIVPAAFGYWL) form an intramembrane region, helical. The Cytoplasmic portion of the chain corresponds to 1426-1440 (TLKTTKRGGVFWDTP).

In terms of assembly, homodimer. Interacts (via N-terminus) with host EXOC1 (via C-terminus); this interaction results in EXOC1 degradation through the proteasome degradation pathway. As to quaternary structure, forms heterodimers with envelope protein E in the endoplasmic reticulum and Golgi. Homodimer; in the endoplasmic reticulum and Golgi. Interacts with protein prM. Interacts with non-structural protein 1. In terms of assembly, homodimer; Homohexamer when secreted. Interacts with envelope protein E. NS1 interacts with NS4B. Interacts with host complement protein CFH; this interaction leads to the degradation of C3. As to quaternary structure, interacts (via N-terminus) with serine protease NS3. Forms a heterodimer with serine protease NS3. May form homooligomers. In terms of assembly, forms a heterodimer with NS2B. Interacts with non-structural protein 2A (via N-terminus). Interacts with NS4B. Interacts with unphosphorylated RNA-directed RNA polymerase NS5; this interaction stimulates RNA-directed RNA polymerase NS5 guanylyltransferase activity. Mn(2+) serves as cofactor. The cofactor is Mg(2+). Post-translationally, specific enzymatic cleavages in vivo yield mature proteins. Cleavages in the lumen of endoplasmic reticulum are performed by host signal peptidase, whereas cleavages in the cytoplasmic side are performed by serine protease NS3. Signal cleavage at the 2K-4B site requires a prior NS3 protease-mediated cleavage at the 4A-2K site. Cleaved in post-Golgi vesicles by a host furin, releasing the mature small envelope protein M, and peptide pr. This cleavage is incomplete as up to 30% of viral particles still carry uncleaved prM. In terms of processing, N-glycosylated. Post-translationally, N-glycosylated. The excreted form is glycosylated and this is required for efficient secretion of the protein from infected cells. RNA-directed RNA polymerase NS5: Phosphorylated on serines residues. This phosphorylation may trigger NS5 nuclear localization.

The protein localises to the virion. The protein resides in the host nucleus. Its subcellular location is the host cytoplasm. It is found in the host perinuclear region. It localises to the secreted. The protein localises to the virion membrane. The protein resides in the host endoplasmic reticulum membrane. It carries out the reaction Selective hydrolysis of -Xaa-Xaa-|-Yaa- bonds in which each of the Xaa can be either Arg or Lys and Yaa can be either Ser or Ala.. It catalyses the reaction a ribonucleoside 5'-triphosphate + H2O = a ribonucleoside 5'-diphosphate + phosphate + H(+). The enzyme catalyses ATP + H2O = ADP + phosphate + H(+). Its function is as follows. Plays a role in virus budding by binding to the cell membrane and gathering the viral RNA into a nucleocapsid that forms the core of a mature virus particle. During virus entry, may induce genome penetration into the host cytoplasm after hemifusion induced by the surface proteins. Can migrate to the cell nucleus where it modulates host functions. Overcomes the anti-viral effects of host EXOC1 by sequestering and degrading the latter through the proteasome degradation pathway. Inhibits RNA silencing by interfering with host Dicer. Functionally, prevents premature fusion activity of envelope proteins in trans-Golgi by binding to envelope protein E at pH 6.0. After virion release in extracellular space, gets dissociated from E dimers. In terms of biological role, acts as a chaperone for envelope protein E during intracellular virion assembly by masking and inactivating envelope protein E fusion peptide. prM is the only viral peptide matured by host furin in the trans-Golgi network probably to avoid catastrophic activation of the viral fusion activity in acidic Golgi compartment prior to virion release. prM-E cleavage is inefficient, and many virions are only partially matured. These uncleaved prM would play a role in immune evasion. Its function is as follows. May play a role in virus budding. Exerts cytotoxic effects by activating a mitochondrial apoptotic pathway through M ectodomain. May display a viroporin activity. Binds to host cell surface receptor and mediates fusion between viral and cellular membranes. Envelope protein is synthesized in the endoplasmic reticulum in the form of heterodimer with protein prM. They play a role in virion budding in the ER, and the newly formed immature particle is covered with 60 spikes composed of heterodimer between precursor prM and envelope protein E. The virion is transported to the Golgi apparatus where the low pH causes dissociation of PrM-E heterodimers and formation of E homodimers. prM-E cleavage is inefficient, and many virions are only partially matured. These uncleaved prM would play a role in immune evasion. Functionally, involved in immune evasion, pathogenesis and viral replication. Once cleaved off the polyprotein, is targeted to three destinations: the viral replication cycle, the plasma membrane and the extracellular compartment. Essential for viral replication. Required for formation of the replication complex and recruitment of other non-structural proteins to the ER-derived membrane structures. Excreted as a hexameric lipoparticle that plays a role against host immune response. Antagonizing the complement function. Binds to the host macrophages and dendritic cells. Inhibits signal transduction originating from Toll-like receptor 3 (TLR3). In terms of biological role, component of the viral RNA replication complex that functions in virion assembly and antagonizes the host alpha/beta interferon antiviral response. Its function is as follows. Required cofactor for the serine protease function of NS3. May have membrane-destabilizing activity and form viroporins. Displays three enzymatic activities: serine protease, NTPase and RNA helicase. NS3 serine protease, in association with NS2B, performs its autocleavage and cleaves the polyprotein at dibasic sites in the cytoplasm: C-prM, NS2A-NS2B, NS2B-NS3, NS3-NS4A, NS4A-2K and NS4B-NS5. NS3 RNA helicase binds RNA and unwinds dsRNA in the 3' to 5' direction. Functionally, non-structural protein 4A: Regulates the ATPase activity of the NS3 helicase activity. NS4A allows NS3 helicase to conserve energy during unwinding. In terms of biological role, peptide 2k: Functions as a signal peptide for NS4B and is required for the interferon antagonism activity of the latter. Its function is as follows. Non-structural protein 4B: Induces the formation of ER-derived membrane vesicles where the viral replication takes place. Inhibits interferon (IFN)-induced host STAT1 phosphorylation and nuclear translocation, thereby preventing the establishment of cellular antiviral state by blocking the IFN-alpha/beta pathway. Inhibits STAT2 translocation in the nucleus after IFN-alpha treatment. RNA-directed RNA polymerase NS5: Replicates the viral (+) and (-) RNA genome. Performs the capping of genomes in the cytoplasm. NS5 methylates viral RNA cap at guanine N-7 and ribose 2'-O positions. Besides its role in RNA genome replication, also prevents the establishment of cellular antiviral state by blocking the interferon-alpha/beta (IFN-alpha/beta) signaling pathway. Inhibits host TYK2 and STAT2 phosphorylation, thereby preventing activation of JAK-STAT signaling pathway. This Japanese encephalitis virus (strain Nakayama) (JEV) protein is Genome polyprotein.